The following is a 663-amino-acid chain: UvrABC system protein B (663 aa).

One can recognise a Helicase ATP-binding domain in the interval Asp26–Pro414. Gly39–Thr46 is a binding site for ATP. The short motif at Tyr92–Ile115 is the Beta-hairpin element. In terms of domain architecture, Helicase C-terminal spans Gln430–Leu596. The 36-residue stretch at Ala624–Gln659 folds into the UVR domain.

This sequence belongs to the UvrB family. Forms a heterotetramer with UvrA during the search for lesions. Interacts with UvrC in an incision complex.

It localises to the cytoplasm. The UvrABC repair system catalyzes the recognition and processing of DNA lesions. A damage recognition complex composed of 2 UvrA and 2 UvrB subunits scans DNA for abnormalities. Upon binding of the UvrA(2)B(2) complex to a putative damaged site, the DNA wraps around one UvrB monomer. DNA wrap is dependent on ATP binding by UvrB and probably causes local melting of the DNA helix, facilitating insertion of UvrB beta-hairpin between the DNA strands. Then UvrB probes one DNA strand for the presence of a lesion. If a lesion is found the UvrA subunits dissociate and the UvrB-DNA preincision complex is formed. This complex is subsequently bound by UvrC and the second UvrB is released. If no lesion is found, the DNA wraps around the other UvrB subunit that will check the other stand for damage. The sequence is that of UvrABC system protein B from Legionella pneumophila (strain Lens).